A 271-amino-acid polypeptide reads, in one-letter code: Regulatory protein RecX (271 aa).

This sequence belongs to the RecX family.

It is found in the cytoplasm. Functionally, modulates RecA activity. In Lactobacillus delbrueckii subsp. bulgaricus (strain ATCC 11842 / DSM 20081 / BCRC 10696 / JCM 1002 / NBRC 13953 / NCIMB 11778 / NCTC 12712 / WDCM 00102 / Lb 14), this protein is Regulatory protein RecX.